Here is a 2491-residue protein sequence, read N- to C-terminus: Cation-independent mannose-6-phosphate receptor (2491 aa).

Positions 1 to 40 (MGAAAGRSPHLGPAPARRPQRSLLLLQLLLLVAAPGSTQA) are cleaved as a signal peptide. Residues 41–2304 (QAAPFPELCS…MHKGLSERSQ (2264 aa)) lie on the Lumenal side of the membrane. MRH domains follow at residues 47 to 163 (ELCS…ACKK), 172 to 320 (VPCY…ACHR), 326 to 468 (KTCS…ACVK), 473 to 619 (LLCG…ACVL), 625 to 762 (ENCT…ACPE), 765 to 924 (LECV…ACPI), 932 to 1079 (QACS…ACVP), 1082 to 1219 (VDCQ…ACPV), 1225 to 1363 (DNCE…ACPP), 1367 to 1508 (TECS…ACPM), 1514 to 1648 (DDCQ…ACEQ), and 1650 to 1797 (TECS…VCPD). Cystine bridges form between Cys-49–Cys-69 and Cys-77–Cys-84. N-linked (GlcNAc...) asparagine glycosylation occurs at Asn-112. 8 disulfides stabilise this stretch: Cys-117-Cys-149, Cys-134-Cys-161, Cys-174-Cys-212, Cys-228-Cys-235, Cys-275-Cys-306, Cys-288-Cys-318, Cys-328-Cys-366, and Cys-374-Cys-382. Asn-400 and Asn-435 each carry an N-linked (GlcNAc...) asparagine glycan. Cystine bridges form between Cys-420–Cys-454, Cys-434–Cys-466, Cys-475–Cys-519, and Cys-531–Cys-538. 2 N-linked (GlcNAc...) asparagine glycosylation sites follow: Asn-543 and Asn-581. 2 disulfides stabilise this stretch: Cys-572–Cys-605 and Cys-586–Cys-617. Residue Asn-626 is glycosylated (N-linked (GlcNAc...) asparagine). Intrachain disulfides connect Cys-627–Cys-664, Cys-672–Cys-679, Cys-731–Cys-760, Cys-767–Cys-814, and Cys-823–Cys-830. N-linked (GlcNAc...) asparagine glycosylation is present at Asn-747. Residue Asn-871 is glycosylated (N-linked (GlcNAc...) asparagine). Cystine bridges form between Cys-875/Cys-910, Cys-893/Cys-922, Cys-934/Cys-970, Cys-976/Cys-987, Cys-1042/Cys-1077, Cys-1084/Cys-1125, and Cys-1134/Cys-1142. N-linked (GlcNAc...) asparagine glycans are attached at residues Asn-951 and Asn-957. An N-linked (GlcNAc...) asparagine glycan is attached at Asn-1164. 4 cysteine pairs are disulfide-bonded: Cys-1177–Cys-1205, Cys-1190–Cys-1217, Cys-1227–Cys-1262, and Cys-1270–Cys-1282. An N-linked (GlcNAc...) asparagine glycan is attached at Asn-1246. An N-linked (GlcNAc...) asparagine glycan is attached at Asn-1312. 24 disulfides stabilise this stretch: Cys-1319–Cys-1349, Cys-1333–Cys-1361, Cys-1369–Cys-1408, Cys-1420–Cys-1427, Cys-1461–Cys-1494, Cys-1476–Cys-1506, Cys-1516–Cys-1553, Cys-1559–Cys-1566, Cys-1598–Cys-1634, Cys-1614–Cys-1646, Cys-1652–Cys-1695, Cys-1706–Cys-1713, Cys-1750–Cys-1783, Cys-1766–Cys-1795, Cys-1804–Cys-1839, Cys-1850–Cys-1856, Cys-1893–Cys-1975, Cys-1903–Cys-1927, Cys-1917–Cys-1942, Cys-1957–Cys-1987, Cys-1994–Cys-2029, Cys-2039–Cys-2046, Cys-2082–Cys-2113, and Cys-2096–Cys-2125. The N-linked (GlcNAc...) asparagine glycan is linked to Asn-1656. An N-linked (GlcNAc...) asparagine glycan is attached at Asn-1757. One can recognise a Fibronectin type-II domain in the interval 1802-1989 (DGCTLTDEQL…EWKTKVVCPP (188 aa)). Residue Asn-1816 is glycosylated (N-linked (GlcNAc...) asparagine). MRH domains lie at 1992-2127 (LECK…ACAV) and 2135-2280 (VNGT…VCPL). An N-linked (GlcNAc...) asparagine glycan is attached at Asn-2085. Asn-2136 is a glycosylation site (N-linked (GlcNAc...) asparagine). Intrachain disulfides connect Cys-2188–Cys-2194, Cys-2232–Cys-2266, and Cys-2248–Cys-2278. Residues 2305–2327 (AVGAVLSLLLVALTCCLLALLLY) traverse the membrane as a helical segment. At 2328-2491 (KKERRETVIS…DDSDEDLLHI (164 aa)) the chain is on the cytoplasmic side. The residue at position 2352 (Lys-2352) is an N6-acetyllysine. Phosphoserine is present on Ser-2409. The interval 2424–2491 (GRGAGAESSH…DDSDEDLLHI (68 aa)) is disordered. Arg-2425 bears the Omega-N-methylarginine mark. Residues 2444–2459 (QEREDDRVGLVRGEKA) show a composition bias toward basic and acidic residues. The segment covering 2464-2477 (SSSAQQKTVSSTKL) has biased composition (polar residues). 2 positions are modified to phosphoserine: Ser-2479 and Ser-2484. The span at 2479-2491 (SFHDDSDEDLLHI) shows a compositional bias: basic and acidic residues.

It belongs to the MRL1/IGF2R family. As to quaternary structure, binds HA-I and HA-II plasma membrane adapters. Interacts with DPP4; the interaction is direct. Binds GGA1, GGA2 and GGA3. Interacts with the heterotrimeric retromer cargo-selective complex (CSC), formed by VPS26 (VPS26A or VPS26B), VPS29 and VPS35; which is involved in retrograde trafficking of the receptor from endosomes to the Golgi apparatus. Palmitoylated. Undergoes cysteine S-palmitoylation which promotes interaction with the retromer cargo-selective complex which mediates its retrograde trafficking to the Golgi apparatus.

It is found in the golgi apparatus membrane. It localises to the endosome membrane. Functionally, mediates the transport of phosphorylated lysosomal enzymes from the Golgi complex and the cell surface to lysosomes. Lysosomal enzymes bearing phosphomannosyl residues bind specifically to mannose-6-phosphate receptors in the Golgi apparatus and the resulting receptor-ligand complex is transported to an acidic prelysosomal compartment where the low pH mediates the dissociation of the complex. The receptor is then recycled back to the Golgi for another round of trafficking through its binding to the retromer. This receptor also binds IGF2. Acts as a positive regulator of T-cell coactivation by binding DPP4. The polypeptide is Cation-independent mannose-6-phosphate receptor (IGF2R) (Homo sapiens (Human)).